An 881-amino-acid chain; its full sequence is Valine--tRNA ligase (881 aa).

Residues 76–86 carry the 'HIGH' region motif; it reads PTVSGSLHIGH. The disordered stretch occupies residues 493 to 526; the sequence is DSPILPDESQLPVDPSSQAPEGYTEDQRGKPGGF. The 'KMSKS' region signature appears at 608–612; sequence KMSKS. K611 is an ATP binding site.

Belongs to the class-I aminoacyl-tRNA synthetase family. ValS type 2 subfamily. Monomer.

The protein resides in the cytoplasm. The catalysed reaction is tRNA(Val) + L-valine + ATP = L-valyl-tRNA(Val) + AMP + diphosphate. Functionally, catalyzes the attachment of valine to tRNA(Val). As ValRS can inadvertently accommodate and process structurally similar amino acids such as threonine, to avoid such errors, it has a 'posttransfer' editing activity that hydrolyzes mischarged Thr-tRNA(Val) in a tRNA-dependent manner. This chain is Valine--tRNA ligase, found in Thermobifida fusca (strain YX).